A 310-amino-acid chain; its full sequence is GMP synthase [glutamine-hydrolyzing] subunit B (310 aa).

The region spanning 2–185 (FDPKKFIDEA…LGLPDSIVYR (184 aa)) is the GMPS ATP-PPase domain. 29-35 (SGGVDSS) lines the ATP pocket.

As to quaternary structure, heterodimer composed of a glutamine amidotransferase subunit (A) and a GMP-binding subunit (B).

It carries out the reaction XMP + L-glutamine + ATP + H2O = GMP + L-glutamate + AMP + diphosphate + 2 H(+). It functions in the pathway purine metabolism; GMP biosynthesis; GMP from XMP (L-Gln route): step 1/1. In terms of biological role, catalyzes the synthesis of GMP from XMP. The chain is GMP synthase [glutamine-hydrolyzing] subunit B (guaAB) from Methanocaldococcus jannaschii (strain ATCC 43067 / DSM 2661 / JAL-1 / JCM 10045 / NBRC 100440) (Methanococcus jannaschii).